The sequence spans 81 residues: Photosystem I iron-sulfur center (81 aa).

4Fe-4S ferredoxin-type domains follow at residues 2–31 (SHAV…MVPW) and 39–68 (IASS…IRVY). Residues Cys11, Cys14, Cys17, Cys21, Cys48, Cys51, Cys54, and Cys58 each coordinate [4Fe-4S] cluster.

As to quaternary structure, the cyanobacterial PSI reaction center is composed of one copy each of PsaA,B,C,D,E,F,I,J,K,L,M and X, and forms trimeric complexes. [4Fe-4S] cluster is required as a cofactor.

Its subcellular location is the cellular thylakoid membrane. It catalyses the reaction reduced [plastocyanin] + hnu + oxidized [2Fe-2S]-[ferredoxin] = oxidized [plastocyanin] + reduced [2Fe-2S]-[ferredoxin]. In terms of biological role, apoprotein for the two 4Fe-4S centers FA and FB of photosystem I (PSI); essential for photochemical activity. FB is the terminal electron acceptor of PSI, donating electrons to ferredoxin. The C-terminus interacts with PsaA/B/D and helps assemble the protein into the PSI complex. Required for binding of PsaD and PsaE to PSI. PSI is a plastocyanin/cytochrome c6-ferredoxin oxidoreductase, converting photonic excitation into a charge separation, which transfers an electron from the donor P700 chlorophyll pair to the spectroscopically characterized acceptors A0, A1, FX, FA and FB in turn. The polypeptide is Photosystem I iron-sulfur center (Prochlorococcus marinus (strain MIT 9312)).